The sequence spans 400 residues: Deoxyguanosinetriphosphate triphosphohydrolase-like protein (400 aa).

Residues R73 to N215 form the HD domain.

The protein belongs to the dGTPase family. Type 2 subfamily.

The protein is Deoxyguanosinetriphosphate triphosphohydrolase-like protein of Bartonella quintana (strain Toulouse) (Rochalimaea quintana).